A 342-amino-acid polypeptide reads, in one-letter code: P21 prophage-derived major head protein (342 aa).

Belongs to the lambda phage major capsid protein family.

In Escherichia coli O6:H1 (strain CFT073 / ATCC 700928 / UPEC), this protein is P21 prophage-derived major head protein.